The sequence spans 92 residues: Small ribosomal subunit protein uS19 (92 aa).

The protein belongs to the universal ribosomal protein uS19 family.

Protein S19 forms a complex with S13 that binds strongly to the 16S ribosomal RNA. This Enterococcus faecalis (strain ATCC 700802 / V583) protein is Small ribosomal subunit protein uS19.